We begin with the raw amino-acid sequence, 147 residues long: Hemoglobin subunit beta (147 aa).

N-acetylvaline is present on valine 2. The region spanning 3 to 147 (HLTPEEKNAV…VANALAHKYH (145 aa)) is the Globin domain. At threonine 13 the chain carries Phosphothreonine. Serine 45 carries the post-translational modification Phosphoserine. Lysine 60 is subject to N6-acetyllysine. Position 64 (histidine 64) interacts with heme b. Residue lysine 83 is modified to N6-acetyllysine. Histidine 93 provides a ligand contact to heme b. S-nitrosocysteine is present on cysteine 94. Lysine 145 bears the N6-acetyllysine mark.

The protein belongs to the globin family. As to quaternary structure, heterotetramer of two alpha chains and two beta chains. In terms of tissue distribution, red blood cells.

Its function is as follows. Involved in oxygen transport from the lung to the various peripheral tissues. The chain is Hemoglobin subunit beta (HBB) from Macaca fascicularis (Crab-eating macaque).